The chain runs to 260 residues: Thiamine thiazole synthase (260 aa).

Residues alanine 36, 55 to 56 (EQ), glycine 63, and 154 to 156 (HVD) each bind NAD(+). Residues aspartate 156 and histidine 171 each contribute to the Fe cation site. Position 224 (methionine 224) interacts with NAD(+). Residue arginine 234 coordinates glycine.

Belongs to the THI4 family. In terms of assembly, homooctamer; tetramer of dimers. Fe(2+) serves as cofactor.

The enzyme catalyses hydrogen sulfide + glycine + NAD(+) = ADP-5-ethyl-4-methylthiazole-2-carboxylate + nicotinamide + 3 H2O + H(+). It functions in the pathway cofactor biosynthesis; thiamine diphosphate biosynthesis. Its function is as follows. Involved in the biosynthesis of the thiazole moiety of thiamine. Catalyzes the conversion of NAD and glycine to adenosine diphosphate 5-(2-hydroxyethyl)-4-methylthiazole-2-carboxylate (ADT), an adenylated thiazole intermediate, using free sulfide as a source of sulfur. The sequence is that of Thiamine thiazole synthase from Methanosarcina barkeri (strain Fusaro / DSM 804).